The following is a 671-amino-acid chain: UvrABC system protein B (671 aa).

The Helicase ATP-binding domain maps to 25-412 (EGIDAGLAHQ…AGRVVEQVVR (388 aa)). 38–45 (GVTGSGKT) contributes to the ATP binding site. Positions 91-114 (YYDYYQPEAYVPSSDTFIEKDASI) match the Beta-hairpin motif. A Helicase C-terminal domain is found at 429 to 595 (QVDDLLSEIH…GVFKDVADIM (167 aa)). The tract at residues 600–624 (VPGSRSKKRKGMAKAAEENARYENE) is disordered. The span at 614-624 (AAEENARYENE) shows a compositional bias: basic and acidic residues. The UVR domain occupies 632-667 (NKRIRQLEEKMYQLARDLEFEAAAQMRDEIGKLRER).

The protein belongs to the UvrB family. As to quaternary structure, forms a heterotetramer with UvrA during the search for lesions. Interacts with UvrC in an incision complex.

It is found in the cytoplasm. In terms of biological role, the UvrABC repair system catalyzes the recognition and processing of DNA lesions. A damage recognition complex composed of 2 UvrA and 2 UvrB subunits scans DNA for abnormalities. Upon binding of the UvrA(2)B(2) complex to a putative damaged site, the DNA wraps around one UvrB monomer. DNA wrap is dependent on ATP binding by UvrB and probably causes local melting of the DNA helix, facilitating insertion of UvrB beta-hairpin between the DNA strands. Then UvrB probes one DNA strand for the presence of a lesion. If a lesion is found the UvrA subunits dissociate and the UvrB-DNA preincision complex is formed. This complex is subsequently bound by UvrC and the second UvrB is released. If no lesion is found, the DNA wraps around the other UvrB subunit that will check the other stand for damage. In Pseudomonas savastanoi pv. phaseolicola (strain 1448A / Race 6) (Pseudomonas syringae pv. phaseolicola (strain 1448A / Race 6)), this protein is UvrABC system protein B.